A 146-amino-acid polypeptide reads, in one-letter code: Catabolic 3-dehydroquinase (146 aa).

The active-site Proton acceptor is Tyr-24. Substrate is bound by residues Asn-78, His-84, and Asp-91. The active-site Proton donor is the His-104. Substrate contacts are provided by residues 105–106 (IT) and Arg-115.

It belongs to the type-II 3-dehydroquinase family. Homododecamer. Adopts a ring-like structure, composed of an arrangement of two hexameric rings stacked on top of one another.

The enzyme catalyses 3-dehydroquinate = 3-dehydroshikimate + H2O. The protein operates within aromatic compound metabolism; 3,4-dihydroxybenzoate biosynthesis; 3,4-dihydroxybenzoate from 3-dehydroquinate: step 1/2. Its function is as follows. Is involved in the catabolism of quinate. Allows the utilization of quinate as carbon source via the beta-ketoadipate pathway. This chain is Catabolic 3-dehydroquinase, found in Candida tropicalis (strain ATCC MYA-3404 / T1) (Yeast).